We begin with the raw amino-acid sequence, 153 residues long: Histone H2B.3 (153 aa).

2 stretches are compositionally biased toward basic and acidic residues: residues 1-10 and 20-54; these read MAPKKDEKPA and AKAE…GEKK. A disordered region spans residues 1 to 60; sequence MAPKKDEKPATAEAGAEAPAKAEAKPKAEKAGKKAKKEPAKKAAKEPKGDGEKKDKKKKK. N6-acetyllysine occurs at positions 41 and 42. A Glycyl lysine isopeptide (Lys-Gly) (interchain with G-Cter in ubiquitin) cross-link involves residue lysine 149.

This sequence belongs to the histone H2B family. In terms of assembly, the nucleosome is a histone octamer containing two molecules each of H2A, H2B, H3 and H4 assembled in one H3-H4 heterotetramer and two H2A-H2B heterodimers. The octamer wraps approximately 147 bp of DNA. The N-terminus is blocked. Post-translationally, can be acetylated to form H2BK33ac and H2BK34ac. Acetylated mainly on the ubiquitinated form. In terms of processing, monoubiquitinated to form H2BK143ub1; which is increased during the light period and may give a specific tag for epigenetic transcriptional activation.

The protein resides in the nucleus. It localises to the chromosome. In terms of biological role, core component of nucleosome. Nucleosomes wrap and compact DNA into chromatin, limiting DNA accessibility to the cellular machineries which require DNA as a template. Histones thereby play a central role in transcription regulation, DNA repair, DNA replication and chromosomal stability. DNA accessibility is regulated via a complex set of post-translational modifications of histones, also called histone code, and nucleosome remodeling. The chain is Histone H2B.3 from Chlamydomonas reinhardtii (Chlamydomonas smithii).